We begin with the raw amino-acid sequence, 85 residues long: MENLGDLAQGLALLGKYLGAGLCMGIGAIGPGIGEGNIGAHAMDAMARQPEMVGTITTRMLLADAVAETTGIYSLLIAFMILLVV.

Transmembrane regions (helical) follow at residues Gly10–Gly30 and Ala65–Val85.

It belongs to the ATPase C chain family. As to quaternary structure, F-type ATPases have 2 components, F(1) - the catalytic core - and F(0) - the membrane proton channel. F(1) has five subunits: alpha(3), beta(3), gamma(1), delta(1), epsilon(1). F(0) has three main subunits: a(1), b(2) and c(10-14). The alpha and beta chains form an alternating ring which encloses part of the gamma chain. F(1) is attached to F(0) by a central stalk formed by the gamma and epsilon chains, while a peripheral stalk is formed by the delta and b chains.

It is found in the cell inner membrane. Its function is as follows. F(1)F(0) ATP synthase produces ATP from ADP in the presence of a proton or sodium gradient. F-type ATPases consist of two structural domains, F(1) containing the extramembraneous catalytic core and F(0) containing the membrane proton channel, linked together by a central stalk and a peripheral stalk. During catalysis, ATP synthesis in the catalytic domain of F(1) is coupled via a rotary mechanism of the central stalk subunits to proton translocation. In terms of biological role, key component of the F(0) channel; it plays a direct role in translocation across the membrane. A homomeric c-ring of between 10-14 subunits forms the central stalk rotor element with the F(1) delta and epsilon subunits. In Thermotoga maritima (strain ATCC 43589 / DSM 3109 / JCM 10099 / NBRC 100826 / MSB8), this protein is ATP synthase subunit c.